Consider the following 199-residue polypeptide: Protein-methionine-sulfoxide reductase heme-binding subunit MsrQ (199 aa).

5 consecutive transmembrane segments (helical) span residues 8–28, 82–102, 116–136, 149–169, and 171–191; these read ITWL…WLFW, LWCF…ELGI, PYLT…LTST, FLHN…LWSV, and ILSP…AWRY.

It belongs to the MsrQ family. In terms of assembly, heterodimer of a catalytic subunit (MsrP) and a heme-binding subunit (MsrQ). Requires FMN as cofactor. Heme b is required as a cofactor.

The protein resides in the cell inner membrane. In terms of biological role, part of the MsrPQ system that repairs oxidized periplasmic proteins containing methionine sulfoxide residues (Met-O), using respiratory chain electrons. Thus protects these proteins from oxidative-stress damage caused by reactive species of oxygen and chlorine generated by the host defense mechanisms. MsrPQ is essential for the maintenance of envelope integrity under bleach stress, rescuing a wide series of structurally unrelated periplasmic proteins from methionine oxidation. MsrQ provides electrons for reduction to the reductase catalytic subunit MsrP, using the quinone pool of the respiratory chain. This chain is Protein-methionine-sulfoxide reductase heme-binding subunit MsrQ, found in Enterobacter sp. (strain 638).